The following is a 217-amino-acid chain: THAP domain-containing protein 2 (217 aa).

The THAP-type zinc finger occupies Met1–Phe80. The HCFC1-binding motif (HBM) motif lies at Glu122–Tyr125.

This is THAP domain-containing protein 2 (Thap2) from Mus musculus (Mouse).